Here is a 240-residue protein sequence, read N- to C-terminus: 2,3-bisphosphoglycerate-dependent phosphoglycerate mutase (240 aa).

Residues 5–12 (RHGESVWN), 18–19 (TG), Arg57, 84–87 (ERHY), Lys95, 111–112 (RR), and 180–181 (GN) contribute to the substrate site. The active-site Tele-phosphohistidine intermediate is the His6. Residue Glu84 is the Proton donor/acceptor of the active site.

This sequence belongs to the phosphoglycerate mutase family. BPG-dependent PGAM subfamily. In terms of assembly, homodimer.

It catalyses the reaction (2R)-2-phosphoglycerate = (2R)-3-phosphoglycerate. The protein operates within carbohydrate degradation; glycolysis; pyruvate from D-glyceraldehyde 3-phosphate: step 3/5. Functionally, catalyzes the interconversion of 2-phosphoglycerate and 3-phosphoglycerate. The polypeptide is 2,3-bisphosphoglycerate-dependent phosphoglycerate mutase (Nitrosococcus oceani (strain ATCC 19707 / BCRC 17464 / JCM 30415 / NCIMB 11848 / C-107)).